Here is a 317-residue protein sequence, read N- to C-terminus: Melanocyte-stimulating hormone receptor (317 aa).

Topologically, residues methionine 1–glutamate 37 are extracellular. N-linked (GlcNAc...) asparagine glycosylation is present at asparagine 29. The helical transmembrane segment at valine 38–isoleucine 63 threads the bilayer. Residues alanine 64–proline 72 are Cytoplasmic-facing. Residues methionine 73 to leucine 93 traverse the membrane as a helical segment. Residues glutamate 94–asparagine 118 lie on the Extracellular side of the membrane. A helical membrane pass occupies residues valine 119–valine 140. The Cytoplasmic portion of the chain corresponds to aspartate 141–arginine 163. Residues isoleucine 164–tyrosine 183 form a helical membrane-spanning segment. The Extracellular portion of the chain corresponds to asparagine 184 to cysteine 191. A helical membrane pass occupies residues leucine 192–leucine 211. The Cytoplasmic segment spans residues alanine 212–alanine 240. The helical transmembrane segment at alanine 241–leucine 266 threads the bilayer. Residues cysteine 267–asparagine 279 lie on the Extracellular side of the membrane. A helical transmembrane segment spans residues phenylalanine 280–phenylalanine 300. Residues arginine 301–tryptophan 317 lie on the Cytoplasmic side of the membrane. A lipid anchor (S-palmitoyl cysteine) is attached at cysteine 315.

The protein belongs to the G-protein coupled receptor 1 family. Interacts with MGRN1, but does not undergo MGRN1-mediated ubiquitination; this interaction competes with GNAS-binding and thus inhibits agonist-induced cAMP production. Interacts with OPN3; the interaction results in a decrease in MC1R-mediated cAMP signaling and ultimately a decrease in melanin production in melanocytes.

It localises to the cell membrane. Functionally, receptor for MSH (alpha, beta and gamma) and ACTH. The activity of this receptor is mediated by G proteins which activate adenylate cyclase. Mediates melanogenesis, the production of eumelanin (black/brown) and phaeomelanin (red/yellow), via regulation of cAMP signaling in melanocytes. This Rangifer tarandus (Reindeer) protein is Melanocyte-stimulating hormone receptor (MC1R).